Here is a 357-residue protein sequence, read N- to C-terminus: Phenylalanine--tRNA ligase alpha subunit (357 aa).

Position 278 (E278) interacts with Mg(2+).

The protein belongs to the class-II aminoacyl-tRNA synthetase family. Phe-tRNA synthetase alpha subunit type 1 subfamily. As to quaternary structure, tetramer of two alpha and two beta subunits. It depends on Mg(2+) as a cofactor.

Its subcellular location is the cytoplasm. The catalysed reaction is tRNA(Phe) + L-phenylalanine + ATP = L-phenylalanyl-tRNA(Phe) + AMP + diphosphate + H(+). The chain is Phenylalanine--tRNA ligase alpha subunit from Albidiferax ferrireducens (strain ATCC BAA-621 / DSM 15236 / T118) (Rhodoferax ferrireducens).